A 328-amino-acid polypeptide reads, in one-letter code: NADH-quinone oxidoreductase subunit H 1 (328 aa).

A run of 8 helical transmembrane segments spans residues 11-31, 81-101, 116-136, 154-174, 189-209, 235-257, 269-289, and 308-328; these read VVKA…FLLF, LAPV…PWAP, VLVI…GGWA, ISYE…TGSV, LFPQ…EAGW, GLFF…TFFL, IPGF…LYWI, and VLLP…ALWA.

This sequence belongs to the complex I subunit 1 family. As to quaternary structure, NDH-1 is composed of 14 different subunits. Subunits NuoA, H, J, K, L, M, N constitute the membrane sector of the complex.

The protein localises to the cell membrane. It catalyses the reaction a quinone + NADH + 5 H(+)(in) = a quinol + NAD(+) + 4 H(+)(out). In terms of biological role, NDH-1 shuttles electrons from NADH, via FMN and iron-sulfur (Fe-S) centers, to quinones in the respiratory chain. The immediate electron acceptor for the enzyme in this species is believed to be ubiquinone. Couples the redox reaction to proton translocation (for every two electrons transferred, four hydrogen ions are translocated across the cytoplasmic membrane), and thus conserves the redox energy in a proton gradient. This subunit may bind ubiquinone. The chain is NADH-quinone oxidoreductase subunit H 1 from Symbiobacterium thermophilum (strain DSM 24528 / JCM 14929 / IAM 14863 / T).